Here is a 133-residue protein sequence, read N- to C-terminus: p53 and DNA damage-regulated protein 1 (133 aa).

It belongs to the prefoldin subunit beta family. In terms of assembly, component of the PAQosome complex which is responsible for the biogenesis of several protein complexes and which consists of R2TP complex members RUVBL1, RUVBL2, RPAP3 and PIH1D1, URI complex members PFDN2, PFDN6, PDRG1, UXT and URI1 as well as ASDURF, POLR2E and DNAAF10/WDR92.

It localises to the cytoplasm. Functionally, may play a role in chaperone-mediated protein folding. This Mus musculus (Mouse) protein is p53 and DNA damage-regulated protein 1 (Pdrg1).